Here is a 990-residue protein sequence, read N- to C-terminus: Glycine dehydrogenase (decarboxylating) (990 aa).

Lysine 726 is modified (N6-(pyridoxal phosphate)lysine).

Belongs to the GcvP family. The glycine cleavage system is composed of four proteins: P, T, L and H. Pyridoxal 5'-phosphate is required as a cofactor.

The enzyme catalyses N(6)-[(R)-lipoyl]-L-lysyl-[glycine-cleavage complex H protein] + glycine + H(+) = N(6)-[(R)-S(8)-aminomethyldihydrolipoyl]-L-lysyl-[glycine-cleavage complex H protein] + CO2. The glycine cleavage system catalyzes the degradation of glycine. The P protein binds the alpha-amino group of glycine through its pyridoxal phosphate cofactor; CO(2) is released and the remaining methylamine moiety is then transferred to the lipoamide cofactor of the H protein. The chain is Glycine dehydrogenase (decarboxylating) from Rhodopseudomonas palustris (strain ATCC BAA-98 / CGA009).